Reading from the N-terminus, the 325-residue chain is Tetraacyldisaccharide 4'-kinase (325 aa).

58 to 65 (TVGGSGKT) contacts ATP.

This sequence belongs to the LpxK family.

The catalysed reaction is a lipid A disaccharide + ATP = a lipid IVA + ADP + H(+). Its pathway is glycolipid biosynthesis; lipid IV(A) biosynthesis; lipid IV(A) from (3R)-3-hydroxytetradecanoyl-[acyl-carrier-protein] and UDP-N-acetyl-alpha-D-glucosamine: step 6/6. In terms of biological role, transfers the gamma-phosphate of ATP to the 4'-position of a tetraacyldisaccharide 1-phosphate intermediate (termed DS-1-P) to form tetraacyldisaccharide 1,4'-bis-phosphate (lipid IVA). The protein is Tetraacyldisaccharide 4'-kinase of Coxiella burnetii (strain CbuG_Q212) (Coxiella burnetii (strain Q212)).